The chain runs to 488 residues: GTPase Der (488 aa).

EngA-type G domains are found at residues 3-166 (PVVA…AEAM) and 199-372 (IKLA…DSAT). GTP-binding positions include 9–16 (GRPNVGKS), 56–60 (DTGGI), 118–121 (NKVD), 205–212 (GKPNVGKS), 252–256 (DTAGV), and 317–320 (NKWD). Residues 373–457 (RRVSTSMLTR…PIQLRFQEGD (85 aa)) form the KH-like domain. Residues 460-488 (FENKTEKLTMSQERRRKRAQSHIKDRKTK) are disordered. Basic residues predominate over residues 473–488 (RRRKRAQSHIKDRKTK).

The protein belongs to the TRAFAC class TrmE-Era-EngA-EngB-Septin-like GTPase superfamily. EngA (Der) GTPase family. In terms of assembly, associates with the 50S ribosomal subunit.

GTPase that plays an essential role in the late steps of ribosome biogenesis. The chain is GTPase Der from Shewanella baltica (strain OS155 / ATCC BAA-1091).